Here is a 457-residue protein sequence, read N- to C-terminus: Siroheme synthase (457 aa).

The precorrin-2 dehydrogenase /sirohydrochlorin ferrochelatase stretch occupies residues Met1–Thr204. NAD(+) contacts are provided by residues Asp22–Val23 and Leu43–Ala44. The residue at position 128 (Ser128) is a Phosphoserine. Residues Gly216–His457 are uroporphyrinogen-III C-methyltransferase. S-adenosyl-L-methionine is bound at residue Pro225. Asp248 functions as the Proton acceptor in the catalytic mechanism. Residue Lys270 is the Proton donor of the active site. S-adenosyl-L-methionine is bound by residues Gly301–Asp303, Ile306, Thr331–Ala332, Met382, and Gly411.

It in the N-terminal section; belongs to the precorrin-2 dehydrogenase / sirohydrochlorin ferrochelatase family. In the C-terminal section; belongs to the precorrin methyltransferase family.

It catalyses the reaction uroporphyrinogen III + 2 S-adenosyl-L-methionine = precorrin-2 + 2 S-adenosyl-L-homocysteine + H(+). It carries out the reaction precorrin-2 + NAD(+) = sirohydrochlorin + NADH + 2 H(+). The enzyme catalyses siroheme + 2 H(+) = sirohydrochlorin + Fe(2+). It participates in cofactor biosynthesis; adenosylcobalamin biosynthesis; precorrin-2 from uroporphyrinogen III: step 1/1. It functions in the pathway cofactor biosynthesis; adenosylcobalamin biosynthesis; sirohydrochlorin from precorrin-2: step 1/1. Its pathway is porphyrin-containing compound metabolism; siroheme biosynthesis; precorrin-2 from uroporphyrinogen III: step 1/1. The protein operates within porphyrin-containing compound metabolism; siroheme biosynthesis; siroheme from sirohydrochlorin: step 1/1. It participates in porphyrin-containing compound metabolism; siroheme biosynthesis; sirohydrochlorin from precorrin-2: step 1/1. Its function is as follows. Multifunctional enzyme that catalyzes the SAM-dependent methylations of uroporphyrinogen III at position C-2 and C-7 to form precorrin-2 via precorrin-1. Then it catalyzes the NAD-dependent ring dehydrogenation of precorrin-2 to yield sirohydrochlorin. Finally, it catalyzes the ferrochelation of sirohydrochlorin to yield siroheme. The polypeptide is Siroheme synthase (Escherichia coli O17:K52:H18 (strain UMN026 / ExPEC)).